A 334-amino-acid chain; its full sequence is Geranylgeranyl pyrophosphate synthase ltmG (334 aa).

Isopentenyl diphosphate contacts are provided by lysine 53, arginine 56, and histidine 85. The Mg(2+) site is built by aspartate 92 and aspartate 96. Position 101 (arginine 101) interacts with dimethylallyl diphosphate. Residue arginine 102 participates in isopentenyl diphosphate binding. Dimethylallyl diphosphate is bound by residues lysine 179, threonine 180, and glutamine 213. Aspartate 216 provides a ligand contact to Mg(2+). Positions 220, 230, and 240 each coordinate dimethylallyl diphosphate.

The protein belongs to the FPP/GGPP synthase family. The cofactor is Mg(2+).

The enzyme catalyses isopentenyl diphosphate + dimethylallyl diphosphate = (2E)-geranyl diphosphate + diphosphate. It carries out the reaction isopentenyl diphosphate + (2E)-geranyl diphosphate = (2E,6E)-farnesyl diphosphate + diphosphate. It catalyses the reaction isopentenyl diphosphate + (2E,6E)-farnesyl diphosphate = (2E,6E,10E)-geranylgeranyl diphosphate + diphosphate. It functions in the pathway secondary metabolite biosynthesis. Geranylgeranyl pyrophosphate synthase; part of the gene cluster that mediates the biosynthesis of lolitrems, indole-diterpene mycotoxins that are potent tremorgens in mammals, and are synthesized by clavicipitaceous fungal endophytes in association with their grass hosts. The geranylgeranyl diphosphate (GGPP) synthase ltmG is proposed to catalyze the first step in lolitrem biosynthesis. LtmG catalyzes a series of iterative condensations of isopentenyl diphosphate (IPP) with dimethylallyl diphosphate (DMAPP), geranyl diphosphate (GPP), and farnesyl diphosphate (FPP), to form GGPP. GGPP then condenses with indole-3-glycerol phosphate to form 3-geranylgeranylindole, an acyclic intermediate, to be incorporated into paxilline. Either ltmG or ltmC could be responsible for this step, as both are putative prenyl transferases. The FAD-dependent monooxygenase ltmM then catalyzes the epoxidation of the two terminal alkenes of the geranylgeranyl moiety, which is subsequently cyclized by ltmB, to paspaline. The cytochrome P450 monooxygenases ltmQ and ltmP can sequentially oxidize paspaline to terpendole E and terpendole F. Alternatively, ltmP converts paspaline to an intermediate which is oxidized by ltmQ to terpendole F. LtmF, ltmK, ltmE and ltmJ appear to be unique to the epichloe endophytes. The prenyltransferase ltmF is involved in the 27-hydroxyl-O-prenylation. The cytochrome P450 monooxygenase ltmK is required for the oxidative acetal ring formation. The multi-functional prenyltransferase ltmE is required for C20- and C21-prenylations of the indole ring of paspalanes and acts together with the cytochrome P450 monooxygenase ltmJ to yield lolitremanes by multiple oxidations and ring closures. The stereoisomer pairs of lolitriol and lolitrem N or lolitrem B and lolitrem F may be attributed to variations in the way in which ring closure can occur under the action of ltmJ. While the major product of this pathway is lolitrem B, the prenyl transferases and cytochrome P450 monooxygenases identified in this pathway have a remarkable versatility in their regio- and stereo-specificities to generate a diverse range of metabolites that are products of a metabolic grid rather than a linear pathway. The sequence is that of Geranylgeranyl pyrophosphate synthase ltmG from Epichloe festucae (strain Fl1).